A 466-amino-acid polypeptide reads, in one-letter code: 3-isopropylmalate dehydratase large subunit (466 aa).

C347, C407, and C410 together coordinate [4Fe-4S] cluster.

It belongs to the aconitase/IPM isomerase family. LeuC type 1 subfamily. Heterodimer of LeuC and LeuD. [4Fe-4S] cluster is required as a cofactor.

The catalysed reaction is (2R,3S)-3-isopropylmalate = (2S)-2-isopropylmalate. Its pathway is amino-acid biosynthesis; L-leucine biosynthesis; L-leucine from 3-methyl-2-oxobutanoate: step 2/4. Functionally, catalyzes the isomerization between 2-isopropylmalate and 3-isopropylmalate, via the formation of 2-isopropylmaleate. This is 3-isopropylmalate dehydratase large subunit from Acidiphilium cryptum (strain JF-5).